The sequence spans 213 residues: uncharacterized protein (213 aa).

This is an uncharacterized protein from Acanthamoeba polyphaga mimivirus (APMV).